The primary structure comprises 182 residues: Acireductone dioxygenase (182 aa).

His100, His102, Glu106, and His145 together coordinate Fe(2+). Ni(2+) contacts are provided by His100, His102, Glu106, and His145.

This sequence belongs to the acireductone dioxygenase (ARD) family. Monomer. It depends on Fe(2+) as a cofactor. Requires Ni(2+) as cofactor.

The enzyme catalyses 1,2-dihydroxy-5-(methylsulfanyl)pent-1-en-3-one + O2 = 3-(methylsulfanyl)propanoate + CO + formate + 2 H(+). The catalysed reaction is 1,2-dihydroxy-5-(methylsulfanyl)pent-1-en-3-one + O2 = 4-methylsulfanyl-2-oxobutanoate + formate + 2 H(+). Its pathway is amino-acid biosynthesis; L-methionine biosynthesis via salvage pathway; L-methionine from S-methyl-5-thio-alpha-D-ribose 1-phosphate: step 5/6. Functionally, catalyzes 2 different reactions between oxygen and the acireductone 1,2-dihydroxy-3-keto-5-methylthiopentene (DHK-MTPene) depending upon the metal bound in the active site. Fe-containing acireductone dioxygenase (Fe-ARD) produces formate and 2-keto-4-methylthiobutyrate (KMTB), the alpha-ketoacid precursor of methionine in the methionine recycle pathway. Ni-containing acireductone dioxygenase (Ni-ARD) produces methylthiopropionate, carbon monoxide and formate, and does not lie on the methionine recycle pathway. This chain is Acireductone dioxygenase, found in Nostoc sp. (strain PCC 7120 / SAG 25.82 / UTEX 2576).